The primary structure comprises 118 residues: MPRVKRGVTARARHKKVMKAAKGYYGARSRVYRVAVQAVTKAGQYAYRDRRQKKRQFRQLWIARINAAARQNGLSYSRLINGLKKASIEIDRKILSDIAVHDKLAFTALVEKAKAALV.

Belongs to the bacterial ribosomal protein bL20 family.

Binds directly to 23S ribosomal RNA and is necessary for the in vitro assembly process of the 50S ribosomal subunit. It is not involved in the protein synthesizing functions of that subunit. This chain is Large ribosomal subunit protein bL20, found in Aeromonas hydrophila subsp. hydrophila (strain ATCC 7966 / DSM 30187 / BCRC 13018 / CCUG 14551 / JCM 1027 / KCTC 2358 / NCIMB 9240 / NCTC 8049).